We begin with the raw amino-acid sequence, 339 residues long: Uroporphyrinogen decarboxylase (339 aa).

Substrate is bound by residues R21–R25, D71, Y147, S202, and H315.

Belongs to the uroporphyrinogen decarboxylase family. In terms of assembly, homodimer.

It localises to the cytoplasm. It carries out the reaction uroporphyrinogen III + 4 H(+) = coproporphyrinogen III + 4 CO2. It functions in the pathway porphyrin-containing compound metabolism; protoporphyrin-IX biosynthesis; coproporphyrinogen-III from 5-aminolevulinate: step 4/4. In terms of biological role, catalyzes the decarboxylation of four acetate groups of uroporphyrinogen-III to yield coproporphyrinogen-III. This Helicobacter pylori (strain Shi470) protein is Uroporphyrinogen decarboxylase.